The following is a 232-amino-acid chain: Large ribosomal subunit protein uL1 (232 aa).

The protein belongs to the universal ribosomal protein uL1 family. Part of the 50S ribosomal subunit.

In terms of biological role, binds directly to 23S rRNA. The L1 stalk is quite mobile in the ribosome, and is involved in E site tRNA release. Functionally, protein L1 is also a translational repressor protein, it controls the translation of the L11 operon by binding to its mRNA. The polypeptide is Large ribosomal subunit protein uL1 (Methylorubrum populi (strain ATCC BAA-705 / NCIMB 13946 / BJ001) (Methylobacterium populi)).